The following is a 251-amino-acid chain: Pyrroloquinoline-quinone synthase (251 aa).

This sequence belongs to the PqqC family.

It catalyses the reaction 6-(2-amino-2-carboxyethyl)-7,8-dioxo-1,2,3,4,7,8-hexahydroquinoline-2,4-dicarboxylate + 3 O2 = pyrroloquinoline quinone + 2 H2O2 + 2 H2O + H(+). It functions in the pathway cofactor biosynthesis; pyrroloquinoline quinone biosynthesis. Functionally, ring cyclization and eight-electron oxidation of 3a-(2-amino-2-carboxyethyl)-4,5-dioxo-4,5,6,7,8,9-hexahydroquinoline-7,9-dicarboxylic-acid to PQQ. In Pseudomonas savastanoi pv. phaseolicola (strain 1448A / Race 6) (Pseudomonas syringae pv. phaseolicola (strain 1448A / Race 6)), this protein is Pyrroloquinoline-quinone synthase.